The chain runs to 493 residues: Arginine decarboxylase (493 aa).

Position 229 is an N6-(pyridoxal phosphate)lysine (lysine 229).

Belongs to the Orn/Lys/Arg decarboxylase class-I family. Requires pyridoxal 5'-phosphate as cofactor.

It localises to the cytoplasm. The enzyme catalyses L-arginine + H(+) = agmatine + CO2. The protein operates within amine and polyamine biosynthesis; agmatine biosynthesis; agmatine from L-arginine: step 1/1. In terms of biological role, catalyzes the formation of agmatine from arginine. The protein is Arginine decarboxylase (speA) of Bacillus anthracis.